Reading from the N-terminus, the 400-residue chain is Flavo-diiron protein FprA2 (400 aa).

The segment at 32–216 (GTSYNAYLIK…VVKGLDILDA (185 aa)) is zinc metallo-hydrolase. 6 residues coordinate Fe cation: His79, Glu81, Asp83, His147, Asp166, and His226. Positions 257–397 (IPIFYCSAYG…KAFKFGEDFA (141 aa)) constitute a Flavodoxin-like domain. Residues 263–267 (SAYGN) and 345–372 (AFGS…KVFQ) each bind FMN.

It in the N-terminal section; belongs to the zinc metallo-hydrolase group 3 family. Homotetramer. FMN is required as a cofactor. It depends on Fe cation as a cofactor.

The enzyme catalyses 2 NADH + O2 + 2 H(+) = 2 NAD(+) + 2 H2O. Its function is as follows. Catalyzes the four-electron reduction of molecular oxygen to water. In fact, functions as the terminal component of an NADH oxidase (NADH:O(2) oxidoreductase) when using NADH:rubredoxin oxidoreductase (NROR) and rubredoxin (Rd) as electron transport intermediaries between NADH and FDP. Is thus able to reductively scavenge intracellular dioxygen and is part of an oxidative stress defense system in C.acetobutylicum, an obligate anaerobic bacterium. Can also serve as the terminal component of an NADH:nitric oxide oxidoreductase (NOR) with a catalytic efficiency comparable to that of its NADH oxidase activity, and therefore might have an in vivo role in scavenging nitric oxide. This chain is Flavo-diiron protein FprA2 (fprA2), found in Clostridium acetobutylicum (strain ATCC 824 / DSM 792 / JCM 1419 / IAM 19013 / LMG 5710 / NBRC 13948 / NRRL B-527 / VKM B-1787 / 2291 / W).